The following is a 189-amino-acid chain: Peptidyl-tRNA hydrolase (189 aa).

Residue Y14 participates in tRNA binding. The Proton acceptor role is filled by H19. TRNA contacts are provided by Y64, N66, and N112.

It belongs to the PTH family. Monomer.

The protein resides in the cytoplasm. It carries out the reaction an N-acyl-L-alpha-aminoacyl-tRNA + H2O = an N-acyl-L-amino acid + a tRNA + H(+). Functionally, hydrolyzes ribosome-free peptidyl-tRNAs (with 1 or more amino acids incorporated), which drop off the ribosome during protein synthesis, or as a result of ribosome stalling. Its function is as follows. Catalyzes the release of premature peptidyl moieties from peptidyl-tRNA molecules trapped in stalled 50S ribosomal subunits, and thus maintains levels of free tRNAs and 50S ribosomes. The sequence is that of Peptidyl-tRNA hydrolase from Clostridium botulinum (strain Loch Maree / Type A3).